A 595-amino-acid chain; its full sequence is Actin-histidine N-methyltransferase (595 aa).

Residues 1–22 (MGKKSRVKTQKSGTGATATVSP) form a disordered region. Polar residues predominate over residues 10-20 (QKSGTGATATV). S-adenosyl-L-methionine contacts are provided by residues arginine 75, 104 to 106 (EGF), arginine 254, 275 to 279 (DMCNH), and 325 to 327 (SGF). Residues 94–314 (EGFEMVNFKE…AGEQIYIFYG (221 aa)) enclose the SET domain. Serine 513 carries the phosphoserine modification. Positions 549–572 (ENGLVNGENSVPNGTRSENENLNQ) are enriched in polar residues. A disordered region spans residues 549 to 595 (ENGLVNGENSVPNGTRSENENLNQEESKRAVEDAKGSSSDNTAEVKE). Residues 573–583 (EESKRAVEDAK) are compositionally biased toward basic and acidic residues. The span at 584–595 (GSSSDNTAEVKE) shows a compositional bias: polar residues.

It belongs to the class V-like SAM-binding methyltransferase superfamily. SETD3 actin-histidine methyltransferase family. Interacts with MYOD1. In terms of processing, phosphorylated by GSK3B, which is required for recognition by the SCF(FBXW7) complex and subsequent degradation. Ubiquitinated by the SCF(FBXW7) complex following phosphorylation by GSK3B, leading to its degradation by the proteasome.

Its subcellular location is the cytoplasm. The protein resides in the nucleus. It catalyses the reaction L-histidyl-[protein] + S-adenosyl-L-methionine = N(tele)-methyl-L-histidyl-[protein] + S-adenosyl-L-homocysteine + H(+). Functionally, protein-histidine N-methyltransferase that specifically mediates 3-methylhistidine (tele-methylhistidine) methylation of actin at 'His-73'. Histidine methylation of actin is required for smooth muscle contraction of the laboring uterus during delivery. Does not have protein-lysine N-methyltransferase activity and probably only catalyzes histidine methylation of actin. This chain is Actin-histidine N-methyltransferase, found in Papio anubis (Olive baboon).